Consider the following 359-residue polypeptide: MAEVQKDAPIKSVQVEALVVMKIVKHCSTSFPTVATGSIVGMDNNGAIEVTNSFQFPSVDVSSSDSHSDASSLAAAAPRAKANIVYQNEMIRHLKEVNVDANNVGWYTSATMGNFINMSFIENQYHYQKENEKTVALVHDVSRSSQGALSLRAFKLSPEFMTAYKEAKFTTESLRNSKLTYKDIFVELPVNVHNSHLLTSFLHQIPAPPKSAEIPMPASLDDIRRDPVQIPAHPGFESLDLSIDPFLEKTCDLLLDSIESHYTDLNNHQYYQRQLTREQFKITQWQAKRKAENAARLAAKQSPLPEDEWQRLFKLPQEPSRLEGMLNARQVDQYARQVDAFTANITAKMFAVRGNLLPE.

Positions 13 to 160 (VQVEALVVMK…LRAFKLSPEF (148 aa)) constitute an MPN domain.

It belongs to the eIF-3 subunit H family. In terms of assembly, component of the eukaryotic translation initiation factor 3 (eIF-3) complex.

The protein resides in the cytoplasm. In terms of biological role, component of the eukaryotic translation initiation factor 3 (eIF-3) complex, which is involved in protein synthesis of a specialized repertoire of mRNAs and, together with other initiation factors, stimulates binding of mRNA and methionyl-tRNAi to the 40S ribosome. The eIF-3 complex specifically targets and initiates translation of a subset of mRNAs involved in cell proliferation. The sequence is that of Eukaryotic translation initiation factor 3 subunit H (eif3h) from Neurospora crassa (strain ATCC 24698 / 74-OR23-1A / CBS 708.71 / DSM 1257 / FGSC 987).